Here is a 421-residue protein sequence, read N- to C-terminus: Bifunctional NAD biosynthesis protein NadR (421 aa).

Residues 57 to 224 are nicotinamide mononucleotide adenylyltransferase; it reads EKKVGVIFGK…KFIPKEARPF (168 aa). Residues 64–67, His-71, Arg-98, 139–152, 172–174, 199–201, 254–256, and 289–292 contribute to the NAD(+) site; these read FGKF, EDGI…WQSW, SSE, FNV, SAW, and YIDY. Residues 225 to 421 form a ribosylnicotinamide kinase region; sequence FAKTVAILGG…TTFPIKGTSQ (197 aa).

It in the N-terminal section; belongs to the bacterial NMN adenylyltransferase family. In the C-terminal section; belongs to the bacterial RNK family. In terms of assembly, homotetramer.

Its subcellular location is the cell membrane. It localises to the cytoplasm. The enzyme catalyses beta-nicotinamide D-ribonucleotide + ATP + H(+) = diphosphate + NAD(+). It catalyses the reaction beta-nicotinamide D-riboside + ATP = beta-nicotinamide D-ribonucleotide + ADP + H(+). Its pathway is cofactor biosynthesis; NAD(+) biosynthesis [regulation]. It functions in the pathway cofactor biosynthesis; NAD(+) biosynthesis; NAD(+) from nicotinamide D-ribonucleotide: step 1/1. With respect to regulation, feed-back regulated by NAD. At high levels of NAD the RN kinase activity is inhibited. In terms of biological role, this enzyme has two activities: nicotinamide mononucleotide (NMN) adenylyltransferase and ribosylnicotinamide (RN) kinase. The RN kinase activity catalyzes the phosphorylation of RN to form nicotinamide ribonucleotide. The NMN adenylyltransferase activity catalyzes the transfer of the AMP moiety of ATP to nicotinamide ribonucleotide to form NAD(+). This is Bifunctional NAD biosynthesis protein NadR (nadR) from Haemophilus influenzae (strain ATCC 51907 / DSM 11121 / KW20 / Rd).